Here is a 580-residue protein sequence, read N- to C-terminus: Alpha-thujene synthase TPS3, chloroplastic (580 aa).

Residues 1 to 26 constitute a chloroplast transit peptide; sequence MALQLLTPSFSFQHSPSPHRLTTLRY. (2E)-geranyl diphosphate is bound by residues Arg296, Asp333, Asp337, Arg473, and Asp476. Positions 333 and 337 each coordinate Mg(2+). The DDXXD motif signature appears at 333-337; sequence DDVYD. 3 residues coordinate Mg(2+): Asp476, Thr480, and Glu484.

This sequence belongs to the terpene synthase family. Tpsb subfamily. In terms of assembly, monomer. Mg(2+) serves as cofactor. Mn(2+) is required as a cofactor. Mostly expressed in developing and mature fruits, and, to a lower extent, in male leaves. Barely detectable in female leaves and shoots.

The protein resides in the plastid. Its subcellular location is the chloroplast. It catalyses the reaction (2E)-geranyl diphosphate = alpha-thujene + diphosphate. The enzyme catalyses (2E)-geranyl diphosphate = (1R,5R)-sabinene + diphosphate. It participates in secondary metabolite biosynthesis; terpenoid biosynthesis. In terms of biological role, monoterpene synthase (TPS) involved in the biosynthesis of monoterpene natural products used by traditional Chinese medicine to treat headache, inflammation and intoxication. Catalyzes the conversion of (2E)-geranyl diphosphate (GPP) into alpha-thujene and (1R,5R)-sabinene. This Litsea cubeba (Aromatic litsea) protein is Alpha-thujene synthase TPS3, chloroplastic.